A 396-amino-acid chain; its full sequence is L-lactate dehydrogenase (396 aa).

The FMN hydroxy acid dehydrogenase domain occupies 1–380 (MIISAASDYR…SGDSLVQELG (380 aa)). Tyr-24 provides a ligand contact to substrate. FMN contacts are provided by Ser-106 and Gln-127. Tyr-129 serves as a coordination point for substrate. An FMN-binding site is contributed by Thr-155. Arg-164 is a substrate binding site. Lys-251 is an FMN binding site. His-275 serves as the catalytic Proton acceptor. Position 278 (Arg-278) interacts with substrate. Position 306-330 (306-330 (DSGIRNGLDVVRMIALGADTVLLGR)) interacts with FMN.

This sequence belongs to the FMN-dependent alpha-hydroxy acid dehydrogenase family. FMN is required as a cofactor.

It is found in the cell inner membrane. The catalysed reaction is (S)-lactate + A = pyruvate + AH2. Functionally, catalyzes the conversion of L-lactate to pyruvate. Is coupled to the respiratory chain. This chain is L-lactate dehydrogenase, found in Salmonella paratyphi A (strain ATCC 9150 / SARB42).